The following is a 1738-amino-acid chain: Sodium leak channel NALCN (1738 aa).

At 1–36 (MLKRKQSSRVEAQPVTDFGPDESLSDNADILWINKP) the chain is on the cytoplasmic side. The helical transmembrane segment at 37–57 (WVHSLLRICAIISVISVCMNT) threads the bilayer. The Extracellular segment spans residues 58-65 (PMTFEHYP). The helical transmembrane segment at 66–90 (PLQYVTFTLDTLLMFLYTAEMIAKM) threads the bilayer. At 91-106 (HIRGIVKGDSSYVKDR) the chain is on the cytoplasmic side. Residues 107–129 (WCVFDGFMVFCLWVSLVLQVFEI) form a helical membrane-spanning segment. Over 130 to 137 (ADIVDQMS) the chain is Extracellular. A helical; Voltage-sensor transmembrane segment spans residues 138 to 158 (PWGMLRIPRPLIMIRAFRIYF). At 159–173 (RFELPRTRITNILKR) the chain is on the cytoplasmic side. The chain crosses the membrane as a helical span at residues 174–199 (SGEQIWSVSIFLLFFLLLYGILGVQM). Topologically, residues 200 to 269 (FGTFTYHCVV…YSGFNEIGTS (70 aa)) are extracellular. Intrachain disulfides connect cysteine 207–cysteine 239 and cysteine 229–cysteine 245. N-linked (GlcNAc...) asparagine glycans are attached at residues asparagine 210 and asparagine 216. An intramembrane region (pore-forming) is located at residues 270–289 (IFTVYEASSQEGWVFLMYRA). Over 290-294 (IDSFP) the chain is Extracellular. The helical transmembrane segment at 295–322 (RWRSYFYFITLIFFLAWLVKNVFIAVII) threads the bilayer. At 323-382 (ETFAEIRVQFQQMWGTRSSTTSTATTQMFHEDAAGGWQLVAVDVNKPQGRAPACLQKMMR) the chain is on the cytoplasmic side. The chain crosses the membrane as a helical span at residues 383–403 (SSVFHMFILSMVTVDVIVAAS). Topologically, residues 404–416 (NYYKGENFRRQYD) are extracellular. A helical membrane pass occupies residues 417 to 439 (EFYLAEVAFTVLFDLEALLKIWC). Residues 440–447 (LGFTGYIS) lie on the Cytoplasmic side of the membrane. The chain crosses the membrane as a helical span at residues 448–468 (SSLHKFELLLVIGTTLHVYPD). The Extracellular segment spans residues 469-472 (LYHS). The helical; Voltage-sensor transmembrane segment at 473–492 (QFTYFQVLRVVRLIKISPAL) threads the bilayer. Over 493–502 (EDFVYKIFGP) the chain is Cytoplasmic. The chain crosses the membrane as a helical span at residues 503–530 (GKKLGSLVVFTASLLIVMSAISLQMFCF). At 531 to 543 (VEELDRFTTFPRA) the chain is on the extracellular side. Residues 544-563 (FMSMFQILTQEGWVDVMDQT) constitute an intramembrane region (pore-forming). The Extracellular segment spans residues 564–578 (LNAVGHMWAPLVAIY). A helical transmembrane segment spans residues 579–599 (FILYHLFATLILLSLFVAVIL). The Cytoplasmic segment spans residues 600–886 (DNLELDEDLK…QLYDLLGLVT (287 aa)). The disordered stretch occupies residues 762 to 785 (QERRSLRHGSNSQRISRGKSLETL). Residues 795–830 (YRNAQREDSEIKMIQEKKEQAEMKRKVQEEELRENH) are a coiled coil. A helical transmembrane segment spans residues 887–906 (YLDWVMITVTICSCISMMFE). Over 907–915 (SPFRRVMHA) the chain is Extracellular. The helical transmembrane segment at 916 to 939 (PTLQIAEYVFVIFMSIELNLKIMA) threads the bilayer. Residues 940–947 (DGLFFTPT) lie on the Cytoplasmic side of the membrane. The chain crosses the membrane as a helical span at residues 948 to 972 (AVIRDFGGVMDIFIYLVSLIFLCWM). Topologically, residues 973–980 (PQNVPAES) are extracellular. Residues 981 to 1003 (GAQLLMVLRCLRPLRIFKLVPQM) form a helical; Voltage-sensor membrane-spanning segment. Over 1004–1015 (RKVVRELFSGFK) the chain is Cytoplasmic. The helical transmembrane segment at 1016–1039 (EIFLVSILLLTLMLVFASFGVQLF) threads the bilayer. Residues 1040-1104 (AGKLAKCNDP…NFNFDNVGNA (65 aa)) lie on the Extracellular side of the membrane. An intrachain disulfide couples cysteine 1046 to cysteine 1057. N-linked (GlcNAc...) asparagine glycosylation is present at asparagine 1064. Positions 1105–1124 (MLALFEVLSLKGWVEVRDVI) form an intramembrane region, pore-forming. The Extracellular portion of the chain corresponds to 1125-1129 (IHRVG). Residues 1130 to 1159 (PIHGIYIHVFVFLGCMIGLTLFVGVVIANF) traverse the membrane as a helical segment. Residues 1160-1210 (NENKGTALLTVDQRRWEDLKSRLKIAQPLHLPPRPDNDGFRAKMYDITQHP) are Cytoplasmic-facing. A helical membrane pass occupies residues 1211–1227 (FFKRTIALLVLAQSVLL). The Extracellular portion of the chain corresponds to 1228-1236 (SVKWDVDDP). Residues 1237 to 1260 (VTVPLATMSVVFTFIFVLEVTMKI) form a helical membrane-spanning segment. The Cytoplasmic portion of the chain corresponds to 1261–1271 (IAMSPAGFWQS). The chain crosses the membrane as a helical span at residues 1272–1293 (RRNRYDLLVTSLGVVWVVLHFA). The Extracellular portion of the chain corresponds to 1294-1296 (LLN). The chain crosses the membrane as a helical; Voltage-sensor span at residues 1297–1318 (AYTYMMGACVIVFRFFSICGKH). Topologically, residues 1319-1331 (VTLKMLLLTVVVS) are cytoplasmic. A helical transmembrane segment spans residues 1332 to 1357 (MYKSFFIIVGMFLLLLCYAFAGVVLF). Residues 1358-1378 (GTVKYGENINRHANFSSAGKA) are Extracellular-facing. The segment at residues 1379 to 1398 (ITVLFRIVTGEDWNKIMHDC) is an intramembrane region (pore-forming). At 1399–1420 (MVQPPFCTPDEFTYWATDCGNY) the chain is on the extracellular side. Cysteine 1405 and cysteine 1417 are joined by a disulfide. Residues 1421-1447 (AGALMYFCSFYVIIAYIMLNLLVAIIV) form a helical membrane-spanning segment. Residues 1448-1738 (ENFSLFYSTE…DESGDDLLDI (291 aa)) lie on the Cytoplasmic side of the membrane. Residues 1602–1679 (EQERSRFLNP…WRLPSAPKPI (78 aa)) form a disordered region. Residues 1613 to 1631 (SIETTQPSEDSNANSQDHS) show a composition bias toward polar residues. Positions 1633–1648 (QPETSSQQQLLSPTLS) are enriched in low complexity.

Belongs to the NALCN family. In terms of assembly, found in a complex with NALCN, UNC79, UNC80 and NACL1; these auxiliary subunits are indispensable for the function of the NALCN channel. Interacts with UNC80; required for the NALCN activation/inhibition by GPCRs in neurons. Found in a complex with NALCN, UNC79 and UNC80; UNC80 bridges NALCN to UNC79. Interacts with CHRM3. Phosphorylated on tyrosine residues. In terms of tissue distribution, widely expressed in the brain and spinal cord neurons. Expressed also in pancreatic islet cells.

The protein localises to the cell membrane. The enzyme catalyses Na(+)(in) = Na(+)(out). Inhibited by low micromolar concentrations of Gd(3+) and high micromolar concentrations of verapamil. Insensitive to tetrodotoxin (TTX) and potentiated by low external Ca(2+) concentration. In terms of biological role, voltage-gated ion channel responsible for the resting Na(+) permeability that controls neuronal excitability. NALCN channel functions as a multi-protein complex, which consists at least of NALCN, NALF1, UNC79 and UNC80. NALCN is the voltage-sensing, pore-forming subunit of the NALCN channel complex. NALCN channel complex is constitutively active and conducts monovalent cations but is blocked by physiological concentrations of extracellular divalent cations. In addition to its role in regulating neuronal excitability, is required for normal respiratory rhythm, systemic osmoregulation by controlling the serum sodium concentration and in the regulation of the intestinal pace-making activity in the interstitial cells of Cajal. Plays a critical role in both maintenance of spontaneous firing of substantia nigra pars reticulata (SNr) neurons and physiological modulation of SNr neuron excitability. NALCN channel is also activated by neuropeptides such as neurotensin and substance P (SP) through a SRC family kinases-dependent pathway. In addition, NALCN activity is enhanced/modulated by several GPCRs, such as CHRM3. The protein is Sodium leak channel NALCN (Nalcn) of Mus musculus (Mouse).